The chain runs to 249 residues: INO80 complex subunit 1 (249 aa).

C2H2-type zinc fingers lie at residues 73 to 100 (YTCE…LRSH) and 106 to 131 (FICS…RTVH).

As to quaternary structure, component of the INO80 chromatin remodeling complex.

It localises to the nucleus. The protein resides in the cytoplasm. Functionally, component of the INO80 complex which remodels chromatin by shifting nucleosomes and is involved in DNA repair. This is INO80 complex subunit 1 (iec1) from Schizosaccharomyces pombe (strain 972 / ATCC 24843) (Fission yeast).